We begin with the raw amino-acid sequence, 721 residues long: Polyribonucleotide nucleotidyltransferase (721 aa).

2 residues coordinate Mg(2+): D495 and D501. The region spanning P562 to I621 is the KH domain. One can recognise an S1 motif domain in the interval G631–R699. A disordered region spans residues G700–S721.

The protein belongs to the polyribonucleotide nucleotidyltransferase family. Mg(2+) serves as cofactor.

It is found in the cytoplasm. It carries out the reaction RNA(n+1) + phosphate = RNA(n) + a ribonucleoside 5'-diphosphate. Involved in mRNA degradation. Catalyzes the phosphorolysis of single-stranded polyribonucleotides processively in the 3'- to 5'-direction. The polypeptide is Polyribonucleotide nucleotidyltransferase (Synechococcus sp. (strain CC9311)).